Here is a 344-residue protein sequence, read N- to C-terminus: Protein POLAR LOCALIZATION DURING ASYMMETRIC DIVISION AND REDISTRIBUTION (344 aa).

At Thr19 the chain carries Phosphothreonine; by ASK7. Residue Ser79 is modified to Phosphoserine; by ASK7. A phosphothreonine; by ASK7 mark is found at Thr84 and Thr86. Residues Ser91 and Ser94 each carry the phosphoserine; by ASK7 modification. 3 positions are modified to phosphothreonine; by ASK7: Thr193, Thr217, and Thr233. Ser235 is subject to Phosphoserine; by ASK7. Residues 262–297 (LETRQQEELVKLETALNRVERRLQEKETEVSWWKDA) adopt a coiled-coil conformation. Phosphoserine; by ASK7 is present on residues Ser308, Ser309, Ser320, Ser321, and Ser336.

In terms of assembly, component of a complex made of POLAR, BASL, ASK7/BIN2 and ASK3/SK12. Interacts with BASL, ASK7/BIN2 and ASK3/SK12. Phosphorylation by ASK7/BIN2 is increases turnover. As to expression, expressed in stomatal lineage cells with asymmetric division potential.

It is found in the cytoplasm. The protein localises to the cell cortex. Its function is as follows. Regulates asymmetric cell division (ACD), especially in stomatal-lineage cells. Acts as a stomatal lineage scaffold which regulates subcellular localization and transient polarization of kinases (e.g. ASK7/BIN2 and ASK3/SK12) involved in ACD in a BASL-dependent manner. Promotes the differentiation of both pavement cells and stomata. The protein is Protein POLAR LOCALIZATION DURING ASYMMETRIC DIVISION AND REDISTRIBUTION of Arabidopsis thaliana (Mouse-ear cress).